The following is a 461-amino-acid chain: Putative transcription initiation factor IIB-like protein (461 aa).

The disordered stretch occupies residues 113-142; the sequence is SESLENIQSENSENNDNFTDNNTKKSPTKS. Residues 121-137 are compositionally biased toward low complexity; the sequence is SENSENNDNFTDNNTKK. Residues 141-173 form a TFIIB-type zinc finger; it reads KSRICSGCGSKGTLLEDQSSSVLVCSECGMIND. Zn(2+)-binding residues include Cys145, Cys165, and Cys168. 2 consecutive repeat copies span residues 246–327 and 360–430.

The protein belongs to the TFIIB family.

The protein is Putative transcription initiation factor IIB-like protein of Acanthamoeba polyphaga mimivirus (APMV).